The chain runs to 365 residues: Protein Wnt-6 (365 aa).

An N-terminal signal peptide occupies residues 1–24 (MLPPLPSRLGLLLLLLLCPAHVGG). Intrachain disulfides connect Cys-76–Cys-87, Cys-124–Cys-132, Cys-134–Cys-172, Cys-222–Cys-236, Cys-224–Cys-231, Cys-294–Cys-325, Cys-310–Cys-320, Cys-324–Cys-364, Cys-340–Cys-355, Cys-342–Cys-352, and Cys-347–Cys-348. A glycan (N-linked (GlcNAc...) asparagine) is linked at Asn-86. Positions 140–158 (RAPPRPSGLPGTPGPPGPA) are enriched in pro residues. A disordered region spans residues 140-164 (RAPPRPSGLPGTPGPPGPAGSPEGS). Ser-228 carries the O-palmitoleoyl serine; by PORCN lipid modification. N-linked (GlcNAc...) asparagine glycosylation is present at Asn-311.

The protein belongs to the Wnt family. Interacts with PORCN. Post-translationally, palmitoleoylation is required for efficient binding to frizzled receptors. Depalmitoleoylation leads to Wnt signaling pathway inhibition. As to expression, expressed in gastric cancer cell lines and gastric cancer tissues (at protein level). Detected in the apical gland region of the gastric foveolar epithelium (at protein level).

It localises to the secreted. The protein localises to the extracellular space. It is found in the extracellular matrix. Functionally, ligand for members of the frizzled family of seven transmembrane receptors. Probable developmental protein. May be a signaling molecule which affects the development of discrete regions of tissues. Is likely to signal over only few cell diameters. Together with CAV1 may promote chemoresistance of gastric cancer cells to DNA-damaging anthracycline drugs through the activation of the canonical Wnt receptor signaling pathway. The polypeptide is Protein Wnt-6 (WNT6) (Homo sapiens (Human)).